A 192-amino-acid chain; its full sequence is Large ribosomal subunit protein uL24c (192 aa).

Residues 1–47 constitute a chloroplast transit peptide; sequence MAAMAALQSSFTSLSLSSNSFLGQRLFPSPTTLQVKTEGHSPCLIVM.

As to quaternary structure, component of the chloroplast large ribosomal subunit (LSU). Mature 70S chloroplast ribosomes of higher plants consist of a small (30S) and a large (50S) subunit. The 30S small subunit contains 1 molecule of ribosomal RNA (16S rRNA) and 24 different proteins. The 50S large subunit contains 3 rRNA molecules (23S, 5S and 4.5S rRNA) and 33 different proteins.

Its subcellular location is the plastid. The protein resides in the chloroplast. In terms of biological role, component of the chloroplast ribosome (chloro-ribosome), a dedicated translation machinery responsible for the synthesis of chloroplast genome-encoded proteins, including proteins of the transcription and translation machinery and components of the photosynthetic apparatus. In Spinacia oleracea (Spinach), this protein is Large ribosomal subunit protein uL24c (RPL24).